The sequence spans 1342 residues: DNA-directed RNA polymerase subunit beta (1342 aa).

The protein belongs to the RNA polymerase beta chain family. The RNAP catalytic core consists of 2 alpha, 1 beta, 1 beta' and 1 omega subunit. When a sigma factor is associated with the core the holoenzyme is formed, which can initiate transcription.

It catalyses the reaction RNA(n) + a ribonucleoside 5'-triphosphate = RNA(n+1) + diphosphate. DNA-dependent RNA polymerase catalyzes the transcription of DNA into RNA using the four ribonucleoside triphosphates as substrates. The polypeptide is DNA-directed RNA polymerase subunit beta (Sodalis glossinidius (strain morsitans)).